We begin with the raw amino-acid sequence, 172 residues long: Ribosome maturation factor RimM (172 aa).

Positions 94 to 167 constitute a PRC barrel domain; sequence EGSYYYKDII…VAHVIVPEGL (74 aa).

Belongs to the RimM family. In terms of assembly, binds ribosomal protein uS19.

It is found in the cytoplasm. Functionally, an accessory protein needed during the final step in the assembly of 30S ribosomal subunit, possibly for assembly of the head region. Essential for efficient processing of 16S rRNA. May be needed both before and after RbfA during the maturation of 16S rRNA. It has affinity for free ribosomal 30S subunits but not for 70S ribosomes. The sequence is that of Ribosome maturation factor RimM from Lacticaseibacillus paracasei (strain ATCC 334 / BCRC 17002 / CCUG 31169 / CIP 107868 / KCTC 3260 / NRRL B-441) (Lactobacillus paracasei).